A 319-amino-acid polypeptide reads, in one-letter code: Ribonucleoside-diphosphate reductase small chain (319 aa).

The Fe cation site is built by Asp70, Glu101, and His104. The active site involves Tyr108. Glu163, Glu197, and His200 together coordinate Fe cation. The interaction with R1 stretch occupies residues 313-319; sequence FSLDVDF.

The protein belongs to the ribonucleoside diphosphate reductase small chain family. As to quaternary structure, interacts with RNR1/OPG080 subunit. Can interact with host RNR1 supunit. Fe cation serves as cofactor.

The enzyme catalyses a 2'-deoxyribonucleoside 5'-diphosphate + [thioredoxin]-disulfide + H2O = a ribonucleoside 5'-diphosphate + [thioredoxin]-dithiol. Functionally, ribonucleoside-diphosphate reductase holoenzyme provides the precursors necessary for viral DNA synthesis. Allows virus growth in non-dividing cells. Catalyzes the biosynthesis of deoxyribonucleotides from the corresponding ribonucleotides. The chain is Ribonucleoside-diphosphate reductase small chain (OPG048) from Variola virus.